Here is a 285-residue protein sequence, read N- to C-terminus: Protease HtpX homolog (285 aa).

Helical transmembrane passes span 7 to 27 and 30 to 50; these read TAML…MIGG and GMTI…WFSD. His131 is a binding site for Zn(2+). Glu132 is a catalytic residue. His135 contacts Zn(2+). 2 helical membrane passes run 146 to 166 and 177 to 197; these read ITAT…FFGG and IAGI…QMAI. Residue Glu202 participates in Zn(2+) binding.

The protein belongs to the peptidase M48B family. Zn(2+) is required as a cofactor.

It is found in the cell inner membrane. The protein is Protease HtpX homolog of Burkholderia cenocepacia (strain ATCC BAA-245 / DSM 16553 / LMG 16656 / NCTC 13227 / J2315 / CF5610) (Burkholderia cepacia (strain J2315)).